We begin with the raw amino-acid sequence, 306 residues long: Agmatinase (306 aa).

H126, D149, H151, D153, D230, and D232 together coordinate Mn(2+).

The protein belongs to the arginase family. Agmatinase subfamily. Mn(2+) is required as a cofactor.

It catalyses the reaction agmatine + H2O = urea + putrescine. Its pathway is amine and polyamine biosynthesis; putrescine biosynthesis via agmatine pathway; putrescine from agmatine: step 1/1. In terms of biological role, catalyzes the formation of putrescine from agmatine. The protein is Agmatinase of Klebsiella pneumoniae (strain 342).